Reading from the N-terminus, the 203-residue chain is Ribonuclease HII (203 aa).

An RNase H type-2 domain is found at 15–201 (LLVAGLDEAG…VAQAPLRFPE (187 aa)). Positions 21, 22, and 111 each coordinate a divalent metal cation.

Belongs to the RNase HII family. Mn(2+) is required as a cofactor. Mg(2+) serves as cofactor.

It is found in the cytoplasm. It carries out the reaction Endonucleolytic cleavage to 5'-phosphomonoester.. In terms of biological role, endonuclease that specifically degrades the RNA of RNA-DNA hybrids. The chain is Ribonuclease HII from Thermus thermophilus (strain ATCC 27634 / DSM 579 / HB8).